A 380-amino-acid polypeptide reads, in one-letter code: Chaperone protein DnaJ (380 aa).

In terms of domain architecture, J spans 5–70; the sequence is DYYEVLGVER…SKRAAYDQYG (66 aa). The CR-type zinc finger occupies 139–217; sequence GTNVNIRVPT…CHGEGRVEES (79 aa). Residues Cys-152, Cys-155, Cys-169, Cys-172, Cys-191, Cys-194, Cys-205, and Cys-208 each coordinate Zn(2+). 4 CXXCXGXG motif repeats span residues 152-159, 169-176, 191-198, and 205-212; these read CKPCDGSG, CPTCGGIG, CPRCHGHG, and CDSCHGEG. The tract at residues 224 to 245 is disordered; the sequence is VPPGVDTGDRIRLSGEGEAGTQ.

The protein belongs to the DnaJ family. As to quaternary structure, homodimer. It depends on Zn(2+) as a cofactor.

It localises to the cytoplasm. Its function is as follows. Participates actively in the response to hyperosmotic and heat shock by preventing the aggregation of stress-denatured proteins and by disaggregating proteins, also in an autonomous, DnaK-independent fashion. Unfolded proteins bind initially to DnaJ; upon interaction with the DnaJ-bound protein, DnaK hydrolyzes its bound ATP, resulting in the formation of a stable complex. GrpE releases ADP from DnaK; ATP binding to DnaK triggers the release of the substrate protein, thus completing the reaction cycle. Several rounds of ATP-dependent interactions between DnaJ, DnaK and GrpE are required for fully efficient folding. Also involved, together with DnaK and GrpE, in the DNA replication of plasmids through activation of initiation proteins. This chain is Chaperone protein DnaJ, found in Pseudomonas syringae pv. syringae (strain B728a).